Here is a 584-residue protein sequence, read N- to C-terminus: 2-succinyl-5-enolpyruvyl-6-hydroxy-3-cyclohexene-1-carboxylate synthase (584 aa).

It belongs to the TPP enzyme family. MenD subfamily. Homodimer. It depends on Mg(2+) as a cofactor. Mn(2+) is required as a cofactor. The cofactor is thiamine diphosphate.

The enzyme catalyses isochorismate + 2-oxoglutarate + H(+) = 5-enolpyruvoyl-6-hydroxy-2-succinyl-cyclohex-3-ene-1-carboxylate + CO2. Its pathway is quinol/quinone metabolism; 1,4-dihydroxy-2-naphthoate biosynthesis; 1,4-dihydroxy-2-naphthoate from chorismate: step 2/7. It functions in the pathway quinol/quinone metabolism; menaquinone biosynthesis. Its function is as follows. Catalyzes the thiamine diphosphate-dependent decarboxylation of 2-oxoglutarate and the subsequent addition of the resulting succinic semialdehyde-thiamine pyrophosphate anion to isochorismate to yield 2-succinyl-5-enolpyruvyl-6-hydroxy-3-cyclohexene-1-carboxylate (SEPHCHC). The protein is 2-succinyl-5-enolpyruvyl-6-hydroxy-3-cyclohexene-1-carboxylate synthase of Bacillus cereus (strain ATCC 14579 / DSM 31 / CCUG 7414 / JCM 2152 / NBRC 15305 / NCIMB 9373 / NCTC 2599 / NRRL B-3711).